Here is a 353-residue protein sequence, read N- to C-terminus: MTIALGKFTKDENDLFDIMDDWLRRDRFVFVGWSGLLLFPCAYFALGGWFTGTTFVTSWYTHGLASSYLEGCNFLTAAVSTPANSLAHSLLLLWGPEAQGDFTRWCQLGGLWTFVALHGAFGLIGFMLRQFELARSVQLRPYNAIAFSGPIAVFVSVFLIYPLGQSGWFFAPSFGVAAIFRFILFFQGFHNWTLNPFHMMGVAGVLGAALLCAIHGATVENTLFEDGDGANTFRAFNPTQAEETYSMVTANRFWSQIFGVAFSNKRWLHFFMLFVPVTGLWMSALGVVGLALNLRAYDFVSQEIRAAEDPEFETFYTKNILLNEGIRAWMAAQDQPHENLIFPEEVLPRGNAL.

Thr2 carries the N-acetylthreonine modification. At Thr2 the chain carries Phosphothreonine. A helical transmembrane segment spans residues 41–61 (CAYFALGGWFTGTTFVTSWYT). Residue His118 coordinates chlorophyll a. A helical transmembrane segment spans residues 125–141 (GFMLRQFELARSVQLRP). Positions 130 and 143 each coordinate pheophytin a. The helical transmembrane segment at 153-166 (VFVSVFLIYPLGQS) threads the bilayer. His198 provides a ligand contact to chlorophyll a. A helical membrane pass occupies residues 208-228 (AALLCAIHGATVENTLFEDGD). Residues His215 and Phe262 each coordinate a plastoquinone. Residue His215 participates in Fe cation binding. His269 provides a ligand contact to Fe cation. The chain crosses the membrane as a helical span at residues 279–295 (GLWMSALGVVGLALNLR).

It belongs to the reaction center PufL/M/PsbA/D family. As to quaternary structure, PSII is composed of 1 copy each of membrane proteins PsbA, PsbB, PsbC, PsbD, PsbE, PsbF, PsbH, PsbI, PsbJ, PsbK, PsbL, PsbM, PsbT, PsbX, PsbY, PsbZ, Psb30/Ycf12, at least 3 peripheral proteins of the oxygen-evolving complex and a large number of cofactors. It forms dimeric complexes. The D1/D2 heterodimer binds P680, chlorophylls that are the primary electron donor of PSII, and subsequent electron acceptors. It shares a non-heme iron and each subunit binds pheophytin, quinone, additional chlorophylls, carotenoids and lipids. There is also a Cl(-1) ion associated with D1 and D2, which is required for oxygen evolution. The PSII complex binds additional chlorophylls, carotenoids and specific lipids. serves as cofactor.

It is found in the plastid. Its subcellular location is the chloroplast thylakoid membrane. It catalyses the reaction 2 a plastoquinone + 4 hnu + 2 H2O = 2 a plastoquinol + O2. Functionally, photosystem II (PSII) is a light-driven water:plastoquinone oxidoreductase that uses light energy to abstract electrons from H(2)O, generating O(2) and a proton gradient subsequently used for ATP formation. It consists of a core antenna complex that captures photons, and an electron transfer chain that converts photonic excitation into a charge separation. The D1/D2 (PsbA/PsbD) reaction center heterodimer binds P680, the primary electron donor of PSII as well as several subsequent electron acceptors. D2 is needed for assembly of a stable PSII complex. The chain is Photosystem II D2 protein from Populus trichocarpa (Western balsam poplar).